Here is a 76-residue protein sequence, read N- to C-terminus: DNA-directed RNA polymerase subunit epsilon (76 aa).

Belongs to the RNA polymerase subunit epsilon family. As to quaternary structure, RNAP is composed of a core of 2 alpha, a beta and a beta' subunit. The core is associated with a delta subunit, and at least one of epsilon or omega. When a sigma factor is associated with the core the holoenzyme is formed, which can initiate transcription.

The catalysed reaction is RNA(n) + a ribonucleoside 5'-triphosphate = RNA(n+1) + diphosphate. A non-essential component of RNA polymerase (RNAP). This Streptococcus agalactiae serotype Ia (strain ATCC 27591 / A909 / CDC SS700) protein is DNA-directed RNA polymerase subunit epsilon.